The chain runs to 122 residues: Flagellar protein FliT (122 aa).

Positions 1–50 are required for homodimerization; it reads MTSTVEFINRWQRIALLSQSLLELAQRGEWELLLQQEVSYLQSIETVMEK. Residues 60 to 98 form a fliD binding region; it reads IQDMVAGYIKQTLDNEQRLKGLLQQRLDELSGLIGQSTR.

The protein belongs to the FliT family. As to quaternary structure, homodimer. Interacts with FliD and FlhC.

The protein resides in the cytoplasm. Its subcellular location is the cytosol. Its function is as follows. Dual-function protein that regulates the transcription of class 2 flagellar operons and that also acts as an export chaperone for the filament-capping protein FliD. As a transcriptional regulator, acts as an anti-FlhDC factor; it directly binds FlhC, thus inhibiting the binding of the FlhC/FlhD complex to class 2 promoters, resulting in decreased expression of class 2 flagellar operons. As a chaperone, effects FliD transition to the membrane by preventing its premature polymerization, and by directing it to the export apparatus. The protein is Flagellar protein FliT of Salmonella arizonae (strain ATCC BAA-731 / CDC346-86 / RSK2980).